Consider the following 158-residue polypeptide: Cystin-1 (158 aa).

Residues 1-146 (MGSGSSRSSR…AAISYDHSEE (146 aa)) are disordered. Residue glycine 2 is the site of N-myristoyl glycine attachment. 2 stretches are compositionally biased toward low complexity: residues 19 to 32 (ESLP…ALEG) and 39 to 52 (PVAA…AAEE). A Ciliary targeting motif motif is present at residues 29–33 (ALEGG). The span at 65–75 (DGRDETLRLLD) shows a compositional bias: basic and acidic residues.

In terms of assembly, interacts (when myristoylated) with UNC119 and UNC119B; interaction is required for localization to cilium. In terms of tissue distribution, expressed at high levels in the kidney and pancreas. Moderate expression seen in the skeletal muscle, liver and heart. A weak expression seen in the brain, lung, uterus, prostate, testis, small intestine and colon.

The protein resides in the cell projection. Its subcellular location is the cilium membrane. It localises to the cytoplasm. The protein localises to the cytoskeleton. It is found in the cilium axoneme. This is Cystin-1 (CYS1) from Homo sapiens (Human).